Reading from the N-terminus, the 570-residue chain is E3 ubiquitin-protein ligase ZFP91 (570 aa).

The segment covering 1 to 12 (MPGETEEPRPPE) has biased composition (basic and acidic residues). Residues 1 to 306 (MPGETEEPRP…PRLPKRRKKP (306 aa)) are disordered. Composition is skewed to low complexity over residues 31–43 (QRPPEAVAAAPAG) and 59–68 (AAAAAAAAAV). The span at 69–82 (SRRRKAEYPRRRRS) shows a compositional bias: basic residues. Phosphoserine is present on residues Ser83 and Ser103. Over residues 94 to 104 (QQPQAAKSPSP) the composition is skewed to polar residues. Residues 119–128 (VTTDKDPKEE) are compositionally biased toward basic and acidic residues. Positions 207-223 (SEEEEEEEEEMLISEEE) are enriched in acidic residues. Composition is skewed to basic and acidic residues over residues 224–245 (IPFKDDPRDETYKPHLERETPK) and 252–269 (KVKEEKEKKEIKVEVEVE). Residues 270-282 (VKEEENEIREDEE) show a composition bias toward acidic residues. 5 C2H2-type zinc fingers span residues 311–336 (VRCEMEGCGTVLAHPRYLQHHIKYQH), 342–366 (YVCPHPSCGRLFRLQKQLLRHAKHH), 372–394 (YICEYCARAFKSSHNLAVHRMIH), 400–422 (LQCEICGFTCRQKASLNWHMKKH), and 430–453 (FSCNICGKKFEKKDSVVAHKAKSH). The tract at residues 338-368 (LKKKYVCPHPSCGRLFRLQKQLLRHAKHHTD) is interaction with MAP3K14/NIK.

This sequence belongs to the krueppel C2H2-type zinc-finger protein family. In terms of assembly, interacts with MAP3K14/NIK. Expressed ubiquitously, particularly at high level in testis. Isoform 2 is testis specific.

It localises to the nucleus. The enzyme catalyses S-ubiquitinyl-[E2 ubiquitin-conjugating enzyme]-L-cysteine + [acceptor protein]-L-lysine = [E2 ubiquitin-conjugating enzyme]-L-cysteine + N(6)-ubiquitinyl-[acceptor protein]-L-lysine.. The protein operates within protein modification; protein ubiquitination. Functionally, atypical E3 ubiquitin-protein ligase that mediates 'Lys-63'-linked ubiquitination of MAP3K14/NIK, leading to stabilize and activate MAP3K14/NIK. It thereby acts as an activator of the non-canonical NF-kappa-B2/NFKB2 pathway. May also play an important role in cell proliferation and/or anti-apoptosis. The protein is E3 ubiquitin-protein ligase ZFP91 (ZFP91) of Homo sapiens (Human).